Here is a 146-residue protein sequence, read N- to C-terminus: Basic phospholipase A2 (146 aa).

An N-terminal signal peptide occupies residues 1–21 (MYPAHLLVLLAVCVSLLGAAS). Positions 22 to 27 (IPPLPL) are excised as a propeptide. 7 disulfide bridges follow: C38/C98, C54/C145, C56/C72, C71/C126, C78/C119, C87/C112, and C105/C117. Ca(2+) is bound by residues Y55, G57, and G59. Residue H75 is part of the active site. D76 lines the Ca(2+) pocket. The active site involves D120.

The protein belongs to the phospholipase A2 family. Group I subfamily. D49 sub-subfamily. Requires Ca(2+) as cofactor. In terms of tissue distribution, expressed by the venom gland.

The protein localises to the secreted. The catalysed reaction is a 1,2-diacyl-sn-glycero-3-phosphocholine + H2O = a 1-acyl-sn-glycero-3-phosphocholine + a fatty acid + H(+). Its function is as follows. Snake venom phospholipase A2 (PLA2) that inhibits neuromuscular transmission by blocking acetylcholine release from the nerve termini. PLA2 catalyzes the calcium-dependent hydrolysis of the 2-acyl groups in 3-sn-phosphoglycerides. In Hydrophis hardwickii (Hardwick's spine-bellied seasnake), this protein is Basic phospholipase A2.